Here is a 222-residue protein sequence, read N- to C-terminus: Homing endonuclease I-ApeI (222 aa).

As to quaternary structure, probably functions as a monomer. It depends on Mg(2+) as a cofactor. Requires Mn(2+) as cofactor.

Functionally, endonuclease involved in 16S rRNA intron I-alpha homing. Recognizes the minimal target 5'-GCAAGGCTGAAACTTAAAGG-3'; generates 4 base 3' protruding ends 5'-AAAC-3' and 5'-GTTT-3'. This is Homing endonuclease I-ApeI (apeI) from Aeropyrum pernix (strain ATCC 700893 / DSM 11879 / JCM 9820 / NBRC 100138 / K1).